Consider the following 101-residue polypeptide: Small ribosomal subunit protein uS14 (101 aa).

Belongs to the universal ribosomal protein uS14 family. Part of the 30S ribosomal subunit. Contacts proteins S3 and S10.

In terms of biological role, binds 16S rRNA, required for the assembly of 30S particles and may also be responsible for determining the conformation of the 16S rRNA at the A site. The chain is Small ribosomal subunit protein uS14 from Tropheryma whipplei (strain TW08/27) (Whipple's bacillus).